A 317-amino-acid chain; its full sequence is Beta-sarcoglycan (317 aa).

Residues 1–31 (MAAAAAATEQQSSNGPVKKSMREKAVERRNV) form a disordered region. Topologically, residues 1 to 64 (MAAAAAATEQ…GLRGRKGNLA (64 aa)) are cytoplasmic. The segment covering 20 to 31 (SMREKAVERRNV) has biased composition (basic and acidic residues). A helical; Signal-anchor for type II membrane protein transmembrane segment spans residues 65–85 (ICVIVLLFILAVINLIITLVI). The Extracellular portion of the chain corresponds to 86-317 (WAVIRIGPNG…TSDNPCGDLY (232 aa)). N-linked (GlcNAc...) asparagine glycosylation is found at N157, N210, and N257. Cystine bridges form between C287–C313 and C289–C306.

Belongs to the sarcoglycan beta/delta/gamma/zeta family. Cross-link to form 2 major subcomplexes: one consisting of SGCB, SGCD and SGCG and the other consisting of SGCB and SGCD. The association between SGCB and SGCG is particularly strong while SGCA is loosely associated with the other sarcoglycans. Post-translationally, disulfide bonds are present.

The protein resides in the cell membrane. Its subcellular location is the sarcolemma. It is found in the cytoplasm. It localises to the cytoskeleton. Component of the sarcoglycan complex, a subcomplex of the dystrophin-glycoprotein complex which forms a link between the F-actin cytoskeleton and the extracellular matrix. The sequence is that of Beta-sarcoglycan (SGCB) from Bos taurus (Bovine).